The sequence spans 1058 residues: Protein argonaute MEL1 (1058 aa).

Composition is skewed to gly residues over residues 1–12 (MAYRGGGRGGRG) and 24–37 (DVPGRGGGGGGGGA). Disordered stretches follow at residues 1 to 77 (MAYR…YGAP) and 115 to 147 (RAPPPSHSSAPAPYQPAAAAPAPSSSSTAPSAT). The span at 48-70 (WPPPGMTPRPGPPQPQYPRPGPP) shows a compositional bias: pro residues. The segment covering 121 to 147 (HSSAPAPYQPAAAAPAPSSSSTAPSAT) has biased composition (low complexity). Residues 407–520 (TVIQFVEEFL…LPMEVCKIVE (114 aa)) enclose the PAZ domain. The 321-residue stretch at 696-1016 (LLIVILPEVS…AAFRARYYVE (321 aa)) folds into the Piwi domain.

It belongs to the argonaute family. Ago subfamily.

The protein localises to the nucleus. The protein resides in the nucleolus. Functionally, essential for the progression of premeiotic mitosis and meiosis during sporogenesis. Regulates the cell division of premeiotic germ cells, the proper modification of meiotic chromosomes, and the faithful progression of meiosis, probably via small RNA-mediated gene silencing. May be involved in histone H3 'Lys-9' demethylation in the pericentromeric region. The polypeptide is Protein argonaute MEL1 (MEL1) (Oryza sativa subsp. japonica (Rice)).